The sequence spans 192 residues: Peptidyl-tRNA hydrolase (192 aa).

Position 17 (Tyr17) interacts with tRNA. His22 functions as the Proton acceptor in the catalytic mechanism. Positions 68, 70, and 116 each coordinate tRNA.

This sequence belongs to the PTH family. As to quaternary structure, monomer.

It localises to the cytoplasm. The enzyme catalyses an N-acyl-L-alpha-aminoacyl-tRNA + H2O = an N-acyl-L-amino acid + a tRNA + H(+). Hydrolyzes ribosome-free peptidyl-tRNAs (with 1 or more amino acids incorporated), which drop off the ribosome during protein synthesis, or as a result of ribosome stalling. Its function is as follows. Catalyzes the release of premature peptidyl moieties from peptidyl-tRNA molecules trapped in stalled 50S ribosomal subunits, and thus maintains levels of free tRNAs and 50S ribosomes. The chain is Peptidyl-tRNA hydrolase from Mycobacterium sp. (strain JLS).